The following is a 453-amino-acid chain: C4-dicarboxylate TRAP transporter large permease protein DctM (453 aa).

13 helical membrane passes run 2–22 (AVAL…PIAI), 50–70 (AFAG…STFM), 82–102 (FAIA…VVAC), 104–124 (MFAA…SIVI), 139–159 (GVIC…VMVV), 172–192 (FLGG…AIYI), 217–237 (ASWG…GIFT), 243–263 (AVAA…MGPF), 289–309 (LYDA…ALIL), 326–346 (MLSA…ILLV), 356–376 (LLVI…IDPI), 380–400 (IMMV…LNLF), and 417–437 (ALPW…VPWV).

This sequence belongs to the TRAP transporter large permease family. The complex comprises the extracytoplasmic solute receptor protein DctP, and the two transmembrane proteins DctQ and DctM.

The protein resides in the cell inner membrane. Part of the tripartite ATP-independent periplasmic (TRAP) transport system DctPQM involved in C4-dicarboxylates uptake. The polypeptide is C4-dicarboxylate TRAP transporter large permease protein DctM (Vibrio cholerae serotype O1 (strain ATCC 39315 / El Tor Inaba N16961)).